Consider the following 1391-residue polypeptide: MNLLNLFNPLQTAGMEEEFDAIKIGIASPETIRSWSYGEVKKPETINYRTFKPERDGLFCAKIFGPVKDYECLCGKYKRLKFKGVTCEKCGVEVTLSKVRRERMGHIELAAPVAHIWFLKSLPSRLGMVLNMTLRDIERVLYFEAFVVTDPGMTPLQRRQLLTEDDYYNKLDEYGDDFDAKMGAEGIRELLRTLDVAGEIEILRQELESTGSDTKIKKIAKRLKVLEAFHRSGMKLEWMIMDVLPVLPPDLRPLVPLDGGRFATSDLNDLYRRVINRNNRLKRLLELHAPDIIVRNEKRMLQEAVDSLLDNGRRGKAMTGANKRPLKSLADMIKGKGGRFRQNLLGKRVDYSGRSVITVGPYLRLHQCGLPKKMALELFKPFIFHKLEKQGLASTVKAAKKLVEQEVPEVWDILEEVIREHPIMLNRAPTLHRLGIQAFEPILIEGKAIQLHPLVCAAFNADFDGDQMAVHVPLSLEAQMEARTLMLASNNVLSPANGEPIIVPSQDIVLGLYYMTRDRINAKGEGSLFADVKEVHRAYHTKQVELGTKITVRLREWVKNEAGEFEPVVNRYETTVGRALLSEILPKGLPFEYVNKALKKKEISKLINASFRLCGLRDTVIFADHLMYTGFGFAAKGGISIAVDDMEIPKEKAALLAEANAEVKEIEDQYRQGLVTNGERYNKVVDIWGRAGDKIAKAMMDNLSKQKVIDRDGNEVDQESFNSIYMMADSGARGSAAQIKQLSGMRGLMAKPDGSIIETPITSNFREGLTVLQYFIATHGARKGLADTALKTANSGYLTRRLVDVTQDLVVVEDDCGTSDGFVMKAVVQGGDVIEALRDRILGRVTASDVVDPSSGETLVEAGTLLTEKLVDMIDQSGVDEVKVRTPITCKTRHGLCAHCYGRDLARGKLVNAGEAVGVIAAQSIGEPGTQLTMRTFHIGGAASRAAAASQVEAKSNGTARFSSQMRYVANNKGELVVIGRSCEVVIHDDIGRERERHKVPYGAILLVQDGMAIKAGQTLATWDPHTRPMITEHAGMVKFENMEEGVTVAKQTDDVTGLSTLVVIDGKRRSSSASKLLRPTVKLLDENGVEICIPGTSTPVSMAFPVGAVITVREGQEIGKGDVLARIPQASSKTRDITGGLPRVAELFEARVPKDAGMLAEITGTVSFGKETKGKQRLIITDVDGVAYETLISKEKQILVHDGQVVNRGETIVDGAVDPHDILRLQGIEALARYIVQEVQEVYRLQGVKISDKHIEVIIRQMLRRVNIADAGETGFITGEQVERGDVMAANEKALEEGKEPARYENILLGITKASLSTDSFISAASFQETTRVLTEAAIMGKQDELRGLKENVIVGRLIPAGTGLTYHRSRHQQWQGVEQETAETQVTDE.

Zn(2+) contacts are provided by cysteine 72, cysteine 74, cysteine 87, and cysteine 90. 3 residues coordinate Mg(2+): aspartate 462, aspartate 464, and aspartate 466. Residues cysteine 816, cysteine 890, cysteine 897, and cysteine 900 each contribute to the Zn(2+) site.

The protein belongs to the RNA polymerase beta' chain family. As to quaternary structure, the RNAP catalytic core consists of 2 alpha, 1 beta, 1 beta' and 1 omega subunit. When a sigma factor is associated with the core the holoenzyme is formed, which can initiate transcription. The cofactor is Mg(2+). Zn(2+) serves as cofactor.

It catalyses the reaction RNA(n) + a ribonucleoside 5'-triphosphate = RNA(n+1) + diphosphate. Functionally, DNA-dependent RNA polymerase catalyzes the transcription of DNA into RNA using the four ribonucleoside triphosphates as substrates. The chain is DNA-directed RNA polymerase subunit beta' from Neisseria gonorrhoeae (strain ATCC 700825 / FA 1090).